Reading from the N-terminus, the 49-residue chain is Large ribosomal subunit protein bL33B (49 aa).

Belongs to the bacterial ribosomal protein bL33 family.

This chain is Large ribosomal subunit protein bL33B, found in Bacillus velezensis (strain DSM 23117 / BGSC 10A6 / LMG 26770 / FZB42) (Bacillus amyloliquefaciens subsp. plantarum).